We begin with the raw amino-acid sequence, 235 residues long: Aspartate/glutamate leucyltransferase (235 aa).

The protein belongs to the R-transferase family. Bpt subfamily.

The protein resides in the cytoplasm. It carries out the reaction N-terminal L-glutamyl-[protein] + L-leucyl-tRNA(Leu) = N-terminal L-leucyl-L-glutamyl-[protein] + tRNA(Leu) + H(+). It catalyses the reaction N-terminal L-aspartyl-[protein] + L-leucyl-tRNA(Leu) = N-terminal L-leucyl-L-aspartyl-[protein] + tRNA(Leu) + H(+). In terms of biological role, functions in the N-end rule pathway of protein degradation where it conjugates Leu from its aminoacyl-tRNA to the N-termini of proteins containing an N-terminal aspartate or glutamate. In Pseudomonas paraeruginosa (strain DSM 24068 / PA7) (Pseudomonas aeruginosa (strain PA7)), this protein is Aspartate/glutamate leucyltransferase.